The following is a 562-amino-acid chain: Membrane protein insertase YidC (562 aa).

Residues 4 to 24 form a helical membrane-spanning segment; it reads QRIFLFLALSILGLLLWTSWE. Residues 33–71 form a disordered region; sequence TEEVVEAEDDVPAPAETPDEAPDPADGETPARDRAEVED. Residues 35–58 are compositionally biased toward acidic residues; the sequence is EVVEAEDDVPAPAETPDEAPDPAD. Residues 61 to 71 are compositionally biased toward basic and acidic residues; it reads TPARDRAEVED. 4 consecutive transmembrane segments (helical) span residues 330–350, 356–376, 426–446, and 499–519; these read MTLS…FWLL, IVGN…LAFY, LGGC…YWVL, and IMMA…AGLV.

The protein belongs to the OXA1/ALB3/YidC family. Type 1 subfamily. Interacts with the Sec translocase complex via SecD. Specifically interacts with transmembrane segments of nascent integral membrane proteins during membrane integration.

It localises to the cell inner membrane. Required for the insertion and/or proper folding and/or complex formation of integral membrane proteins into the membrane. Involved in integration of membrane proteins that insert both dependently and independently of the Sec translocase complex, as well as at least some lipoproteins. Aids folding of multispanning membrane proteins. In Alkalilimnicola ehrlichii (strain ATCC BAA-1101 / DSM 17681 / MLHE-1), this protein is Membrane protein insertase YidC.